We begin with the raw amino-acid sequence, 2116 residues long: Non-structural polyprotein p200 (2116 aa).

Positions 36–49 (EVRDVVTAAQKRAI) are required for efficient proteolysis and P150-P90 interaction. Residues 57 to 247 (VFTQMQVSDH…TRPCTTRIYQ (191 aa)) form the Alphavirus-like MT domain. 2 stretches are compositionally biased toward basic and acidic residues: residues 457-467 (GPLEDGGRHLD) and 497-508 (CAPRRDAPRERP). Disordered regions lie at residues 457–477 (GPLEDGGRHLDTVQPPKSPPR), 497–519 (CAPRRDAPRERPSAPAGPPDDEA), and 712–780 (AGPG…GPAD). 2 stretches are compositionally biased toward pro residues: residues 721 to 730 (SPPPGDPPPP) and 745 to 767 (TPPPAPARDPPPPAPSPPAPPRA). Short sequence motifs (pxxPxR; class II SH3-binding) lie at residues 727–732 (PPPPRR), 747–752 (PPAPAR), and 761–766 (PPAPPR). The region spanning 806–985 (SDIVESYARA…LTHASVLVGA (180 aa)) is the Macro domain. The segment at 992-1031 (VSPPPTEPLASCPAGDPGRPAQRSASPPATPLGDATAPEP) is disordered. The Peptidase C27 domain maps to 1000-1301 (LASCPAGDPG…WLAVPLSRGG (302 aa)). Cys-1152 acts as the For cysteine protease activity in catalysis. The interaction with host CALM1 stretch occupies residues 1152–1183 (CWLRAAASVAQAARACGAYTSAGCPKCAYGRA). Zn(2+) contacts are provided by Cys-1175, Cys-1178, Cys-1227, and His-1273. Residues 1193 to 1228 (FAALSQRWSASHADASPDGTGDPLDPLMETVGCACS) form an EF-hand-like region. The active-site For cysteine protease activity is His-1273. In terms of domain architecture, (+)RNA virus helicase ATP-binding spans 1320–1468 (EVRRLGDDAM…VPDRWPTERS (149 aa)). Position 1352 to 1359 (1352 to 1359 (MAAGAGKT)) interacts with a ribonucleoside 5'-triphosphate. A (+)RNA virus helicase C-terminal domain is found at 1469 to 1609 (RHTWRFPDCW…ELKEVPAGID (141 aa)). An involved in P150-P90 interaction region spans residues 1700 to 1900 (YRAGEDGSTL…VELEISAALL (201 aa)). Residues 1870–1981 (TNAIEVDFTE…FLPEGARSAA (112 aa)) enclose the RdRp catalytic domain. The Human RB1 binding motif lies at 1902–1906 (LPCAE).

As to quaternary structure, interacts with RNA-directed RNA polymerase p90. Interacts with host CALM1; this interaction is necessary for the protease activity and viral infectivity. Interacts with host C1QBP. Interacts with the capsid protein. Interacts with human RB1/retinoblastoma protein. Interacts with protease/methyltransferase p150. The cofactor is Zn(2+). Specific enzymatic cleavage by its own cysteine protease yield mature proteins p150 and p90.

It localises to the host membrane. Its subcellular location is the host cytoplasm. The protein localises to the host perinuclear region. It catalyses the reaction RNA(n) + a ribonucleoside 5'-triphosphate = RNA(n+1) + diphosphate. It carries out the reaction a ribonucleoside 5'-triphosphate + H2O = a ribonucleoside 5'-diphosphate + phosphate + H(+). The catalysed reaction is ATP + H2O = ADP + phosphate + H(+). Functionally, probable principal replicase for the negative-strand DNA, which replicates the 40S (+) genomic RNA into (-) antigenomic RNA. It cannot replicate the (-) into (+) until cleaved into p150 and p90 mature proteins. Its function is as follows. Protease that cleaves the precursor polyprotein into two mature products. Together with RNA-directed RNA polymerase p90, replicates the 40S genomic and antigenomic RNA by recognizing replications specific signals. The heterodimer P150/p90 is probably the principal replicase for positive-strand genomic RNA and the 24S subgenomic RNA, which codes for structural proteins. Responsible for the mRNA-capping of the viral mRNAs. This function is necessary since all viral RNAs are synthesized in the cytoplasm, and host capping enzymes are restricted to the nucleus. Forms fibers late in the infection that may be involved in cell-to-cell spread of the virus RNA in the absence of virus particle formation. In terms of biological role, together with protease/methyltransferase p150, replicates the 40S genomic and antigenomic RNA by recognizing replications specific signals. The heterodimer P150/p90 is probably the principal replicase for positive-strand genomic RNA and the 24S subgenomic RNA, which codes for structural proteins. A helicase activity is probably also present. The sequence is that of Non-structural polyprotein p200 from Homo sapiens (Human).